Here is a 519-residue protein sequence, read N- to C-terminus: Anthranilate synthase component 1 (519 aa).

L-tryptophan-binding positions include Ser39 and 290-292; that span reads PYM. Position 327-328 (327-328) interacts with chorismate; the sequence is GT. Residue Glu360 coordinates Mg(2+). Residues Tyr448, Arg468, 482-484, and Gly484 each bind chorismate; that span reads GAG. Residue Glu497 coordinates Mg(2+).

It belongs to the anthranilate synthase component I family. In terms of assembly, heterotetramer consisting of two non-identical subunits: a beta subunit (TrpG) and a large alpha subunit (TrpE). Mg(2+) is required as a cofactor.

The enzyme catalyses chorismate + L-glutamine = anthranilate + pyruvate + L-glutamate + H(+). It participates in amino-acid biosynthesis; L-tryptophan biosynthesis; L-tryptophan from chorismate: step 1/5. With respect to regulation, feedback inhibited by tryptophan. Its function is as follows. Part of a heterotetrameric complex that catalyzes the two-step biosynthesis of anthranilate, an intermediate in the biosynthesis of L-tryptophan. In the first step, the glutamine-binding beta subunit (TrpG) of anthranilate synthase (AS) provides the glutamine amidotransferase activity which generates ammonia as a substrate that, along with chorismate, is used in the second step, catalyzed by the large alpha subunit of AS (TrpE) to produce anthranilate. In the absence of TrpG, TrpE can synthesize anthranilate directly from chorismate and high concentrations of ammonia. This Serratia marcescens protein is Anthranilate synthase component 1 (trpE).